A 145-amino-acid polypeptide reads, in one-letter code: Large ribosomal subunit protein uL14m (145 aa).

The N-terminal 30 residues, 1-30 (MAFFTGLWGPFTCVSRVLSHHCFSTTGSLS), are a transit peptide targeting the mitochondrion.

The protein belongs to the universal ribosomal protein uL14 family. Component of the mitochondrial large ribosomal subunit (mt-LSU). Mature mammalian 55S mitochondrial ribosomes consist of a small (28S) and a large (39S) subunit. The 28S small subunit contains a 12S ribosomal RNA (12S mt-rRNA) and 30 different proteins. The 39S large subunit contains a 16S rRNA (16S mt-rRNA), a copy of mitochondrial valine transfer RNA (mt-tRNA(Val)), which plays an integral structural role, and 52 different proteins. Interacts with MALSU1.

The protein localises to the mitochondrion. In terms of biological role, forms part of 2 intersubunit bridges in the assembled ribosome. Upon binding to MALSU1 intersubunit bridge formation is blocked, preventing ribosome formation and repressing translation. The chain is Large ribosomal subunit protein uL14m (MRPL14) from Homo sapiens (Human).